The chain runs to 246 residues: 23S rRNA (guanosine-2'-O-)-methyltransferase RlmB (246 aa).

S-adenosyl-L-methionine-binding residues include G197, I217, and L226.

This sequence belongs to the class IV-like SAM-binding methyltransferase superfamily. RNA methyltransferase TrmH family. RlmB subfamily.

It localises to the cytoplasm. The enzyme catalyses guanosine(2251) in 23S rRNA + S-adenosyl-L-methionine = 2'-O-methylguanosine(2251) in 23S rRNA + S-adenosyl-L-homocysteine + H(+). Its function is as follows. Specifically methylates the ribose of guanosine 2251 in 23S rRNA. The chain is 23S rRNA (guanosine-2'-O-)-methyltransferase RlmB from Haemophilus influenzae (strain ATCC 51907 / DSM 11121 / KW20 / Rd).